Here is a 202-residue protein sequence, read N- to C-terminus: ATP-dependent Clp protease proteolytic subunit (202 aa).

The Nucleophile role is filled by S101. H126 is a catalytic residue.

Belongs to the peptidase S14 family. Component of the chloroplastic Clp protease core complex.

It localises to the plastid. It is found in the chloroplast stroma. The catalysed reaction is Hydrolysis of proteins to small peptides in the presence of ATP and magnesium. alpha-casein is the usual test substrate. In the absence of ATP, only oligopeptides shorter than five residues are hydrolyzed (such as succinyl-Leu-Tyr-|-NHMec, and Leu-Tyr-Leu-|-Tyr-Trp, in which cleavage of the -Tyr-|-Leu- and -Tyr-|-Trp bonds also occurs).. In terms of biological role, cleaves peptides in various proteins in a process that requires ATP hydrolysis. Has a chymotrypsin-like activity. Plays a major role in the degradation of misfolded proteins. The sequence is that of ATP-dependent Clp protease proteolytic subunit from Acorus gramineus (Dwarf sweet flag).